We begin with the raw amino-acid sequence, 729 residues long: Circadian input-output histidine kinase CikA (729 aa).

The interval M1–L169 is N-terminal domain. The interval E170–H314 is GAF domain. Positions T366–S587 constitute a Histidine kinase domain. A Phosphohistidine; by autocatalysis modification is found at H369. Residues E613–Q729 form a psR domain, binds KaiB region.

In the N-terminal section; belongs to the phytochrome family. Homodimer. Part of the circadian clock (KaiA, KaiB, KaiC, CikA, RpaA, SasA), the composition of which varies during the circadian cycle. KaiA and CikA compete for binding to KaiB(fs). The PsR domain binds the KaiB:KaiC CI complex but poorly to either protein alone. KaiA and CikA bind to the same region of the KaiB(fs) form and therefore compete.

It carries out the reaction ATP + protein L-histidine = ADP + protein N-phospho-L-histidine.. Its function is as follows. Functions in an input pathway to the Kai circadian clock. Senses oxidized quinones via its C-terminal pseudo-receiver domain, providing a link between cell metabolism and the clock. Affects the ratio of phosphorylated to unphosphorylated KaiC, binds quinones via its pseudo-receptor domain. Quinone-binding destabilizes the protein rapidly. Autophosphorylates, does not transfer the phosphate to its pseudo-receiver (PsR) domain. May play a role in cell division. Functionally, also functions in a two-component CikA/RpaA output pathway from the circadian clock, negatively regulating kaiBC expression independently of labA and of sasA. One of three clock output pathways. Dephosphorylates phospho-RpaA, enhanced by KaiB and KaiC, has only modest kinase activity on RpaA. The sequence is that of Circadian input-output histidine kinase CikA from Thermosynechococcus vestitus (strain NIES-2133 / IAM M-273 / BP-1).